The chain runs to 353 residues: tRNA N6-adenosine threonylcarbamoyltransferase (353 aa).

Fe cation is bound by residues H111 and H115. Residues 134-138 (LVSGG), D167, G180, D184, and N279 contribute to the substrate site. D307 serves as a coordination point for Fe cation.

It belongs to the KAE1 / TsaD family. Requires Fe(2+) as cofactor.

It localises to the cytoplasm. It catalyses the reaction L-threonylcarbamoyladenylate + adenosine(37) in tRNA = N(6)-L-threonylcarbamoyladenosine(37) in tRNA + AMP + H(+). Functionally, required for the formation of a threonylcarbamoyl group on adenosine at position 37 (t(6)A37) in tRNAs that read codons beginning with adenine. Is involved in the transfer of the threonylcarbamoyl moiety of threonylcarbamoyl-AMP (TC-AMP) to the N6 group of A37, together with TsaE and TsaB. TsaD likely plays a direct catalytic role in this reaction. This is tRNA N6-adenosine threonylcarbamoyltransferase from Thermosynechococcus vestitus (strain NIES-2133 / IAM M-273 / BP-1).